The chain runs to 135 residues: uncharacterized protein (135 aa).

The next 2 membrane-spanning stretches (helical) occupy residues 11–31 (ILFFGLAFILVGFGLILGYLI) and 57–77 (LGTAAAVAGGVIAGELITDAI).

The protein resides in the cell membrane. This is an uncharacterized protein from Methanocaldococcus jannaschii (strain ATCC 43067 / DSM 2661 / JAL-1 / JCM 10045 / NBRC 100440) (Methanococcus jannaschii).